The primary structure comprises 1000 residues: Probable coatomer subunit beta' (1000 aa).

7 WD repeats span residues 13–52 (ARSDRVKCVDLHPVETWLLAALYNGNVHIWNYETQTLVKS), 55–94 (VCDVPVRAAKFVPRKSWVVTGSDDMHIRVFNYNTLERVHQ), 97–136 (AHSDYLRSLVVHPTLPYVISSSDDMLVKMWDWDNKWAMKQ), 140–180 (GHTH…PNFT), 183–224 (GHEK…CVQT), 227–266 (GHAQNVSSVCFHPELPLIITGSEDSTVRLWHANTYRLETT), and 351–391 (LGSS…NKDF). The tract at residues 863–1000 (PRQTETQLKA…MDDLNLDEED (138 aa)) is disordered. The segment covering 901-915 (EPEEEEEQEEFDDDQ) has biased composition (acidic residues). A compositionally biased stretch (low complexity) spans 960–969 (SASSQQSAQD). Positions 970 to 1000 (FQDDTQWSDEDFGDAENGDLNMDDLNLDEED) are enriched in acidic residues.

It belongs to the WD repeat COPB2 family. Oligomeric complex that consists of at least the alpha, beta, beta', gamma, delta, epsilon and zeta subunits.

The protein localises to the cytoplasm. It localises to the golgi apparatus membrane. The protein resides in the cytoplasmic vesicle. It is found in the COPI-coated vesicle membrane. Functionally, the coatomer is a cytosolic protein complex that binds to dilysine motifs and reversibly associates with Golgi non-clathrin-coated vesicles, which further mediate biosynthetic protein transport from the ER, via the Golgi up to the trans Golgi network. Coatomer complex is required for budding from Golgi membranes, and is essential for the retrograde Golgi-to-ER transport of dilysine-tagged proteins. The protein is Probable coatomer subunit beta' (copb-2) of Caenorhabditis elegans.